Reading from the N-terminus, the 78-residue chain is Sec-independent protein translocase protein TatA (78 aa).

Residues 1 to 21 (MGGISIWQLLIIAVIVVLLFG) form a helical membrane-spanning segment. Positions 47–59 (ESEKKDADFEPKS) are enriched in basic and acidic residues. Residues 47–78 (ESEKKDADFEPKSLEQQSKQAATESKKDKEQA) form a disordered region. Positions 60-69 (LEQQSKQAAT) are enriched in polar residues.

The protein belongs to the TatA/E family. In terms of assembly, the Tat system comprises two distinct complexes: a TatABC complex, containing multiple copies of TatA, TatB and TatC subunits, and a separate TatA complex, containing only TatA subunits. Substrates initially bind to the TatABC complex, which probably triggers association of the separate TatA complex to form the active translocon.

Its subcellular location is the cell inner membrane. Functionally, part of the twin-arginine translocation (Tat) system that transports large folded proteins containing a characteristic twin-arginine motif in their signal peptide across membranes. TatA could form the protein-conducting channel of the Tat system. The protein is Sec-independent protein translocase protein TatA of Vibrio vulnificus (strain CMCP6).